The sequence spans 243 residues: GTP cyclohydrolase 1 type 2 (243 aa).

Residues His-63, His-64, Asp-102, His-209, and Glu-213 each contribute to the a divalent metal cation site.

The protein belongs to the GTP cyclohydrolase I type 2/NIF3 family. In terms of assembly, homohexamer.

The catalysed reaction is GTP + H2O = 7,8-dihydroneopterin 3'-triphosphate + formate + H(+). The protein operates within cofactor biosynthesis; 7,8-dihydroneopterin triphosphate biosynthesis; 7,8-dihydroneopterin triphosphate from GTP: step 1/1. Its function is as follows. Converts GTP to dihydroneopterin triphosphate. Is not active with GDP, GMP, ATP, CTP or UTP as substrate. The protein is GTP cyclohydrolase 1 type 2 of Helicobacter pylori (strain ATCC 700392 / 26695) (Campylobacter pylori).